Here is a 557-residue protein sequence, read N- to C-terminus: Tryptophan 2-monooxygenase (557 aa).

5 residues coordinate FMN: Ser-49, Glu-69, Arg-71, Arg-77, and Arg-98. Arg-98 contacts substrate.

Belongs to the tryptophan 2-monooxygenase family. As to quaternary structure, monomer. FMN serves as cofactor.

The enzyme catalyses L-tryptophan + O2 = indole-3-acetamide + CO2 + H2O. Its pathway is plant hormone metabolism; auxin biosynthesis. The protein is Tryptophan 2-monooxygenase (iaaM) of Pseudomonas savastanoi (Pseudomonas syringae pv. savastanoi).